We begin with the raw amino-acid sequence, 376 residues long: Zinc-regulated transporter 1 (376 aa).

Residues 1–50 lie on the Extracellular side of the membrane; sequence MSNVTTPWWKQWDPSEVTLADKTPDDVWKTCVLQGVYFGGNEYNGNLGAR. A helical transmembrane segment spans residues 51-71; that stretch reads ISSVFVILFVSTFFTMFPLIS. At 72-80 the chain is on the cytoplasmic side; sequence TKVKRLRIP. The helical transmembrane segment at 81–101 threads the bilayer; the sequence is LYVYLFAKYFGSGVIVATAFI. At 102-122 the chain is on the extracellular side; sequence HLMDPAYGAIGGTTCVGQTGN. A helical transmembrane segment spans residues 123–143; it reads WGLYSWCPAIMLTSLTFTFLT. Residues 144-216 lie on the Cytoplasmic side of the membrane; it reads DLFSSVWVER…TSMDVVQSFQ (73 aa). The span at 177–191 shows a compositional bias: polar residues; that stretch reads VSSENDNENGTANGS. The interval 177 to 196 is disordered; it reads VSSENDNENGTANGSHDTKN. A helical membrane pass occupies residues 217-237; it reads AQFYAFLILEFGVIFHSVMIG. Residues 238 to 242 lie on the Extracellular side of the membrane; it reads LNLGS. The chain crosses the membrane as a helical span at residues 243-263; sequence VGDEFSSLYPVLVFHQSFEGL. Topologically, residues 264-278 are cytoplasmic; the sequence is GIGARLSAIEFPRSK. A helical membrane pass occupies residues 279–299; it reads RWWPWALCVAYGLTTPICVAI. Residues 300–310 lie on the Extracellular side of the membrane; that stretch reads GLGVRTRYVSG. A helical transmembrane segment spans residues 311–331; sequence SYTALVISGVLDAISAGILLY. The Cytoplasmic portion of the chain corresponds to 332–354; that stretch reads TGLVELLARDFIFNPQRTKDLRE. Residues 355–375 form a helical membrane-spanning segment; the sequence is LSFNVICTLFGAGIMALIGKW. A topological domain (extracellular) is located at residue alanine 376.

Belongs to the ZIP transporter (TC 2.A.5) family.

It is found in the membrane. In terms of biological role, high-affinity zinc transport protein. In Saccharomyces cerevisiae (strain ATCC 204508 / S288c) (Baker's yeast), this protein is Zinc-regulated transporter 1 (ZRT1).